Reading from the N-terminus, the 153-residue chain is Small ribosomal subunit protein bS16 (153 aa).

Belongs to the bacterial ribosomal protein bS16 family.

The polypeptide is Small ribosomal subunit protein bS16 (Leifsonia xyli subsp. xyli (strain CTCB07)).